A 600-amino-acid polypeptide reads, in one-letter code: Pyranose dehydrogenase 3 (600 aa).

A signal peptide spans Met-1–Gly-25. Asn-99 and Asn-114 each carry an N-linked (GlcNAc...) asparagine glycan. His-127 bears the Tele-8alpha-FAD histidine mark. 6 N-linked (GlcNAc...) asparagine glycosylation sites follow: Asn-173, Asn-199, Asn-275, Asn-342, Asn-399, and Asn-507. The active-site Proton acceptor is the His-535. The N-linked (GlcNAc...) asparagine glycan is linked to Asn-546. His-579 is an active-site residue.

The protein belongs to the GMC oxidoreductase family. In terms of assembly, monomer. It depends on FAD as a cofactor. Post-translationally, N-glycosylated.

Its subcellular location is the secreted. It catalyses the reaction pyranose + acceptor = pyranos-2-ulose + reduced acceptor.. It carries out the reaction pyranose + acceptor = pyranos-3-ulose + reduced acceptor.. The catalysed reaction is pyranose + acceptor = pyranos-2,3-diulose + reduced acceptor.. The enzyme catalyses a pyranoside + acceptor = a pyranosid-3-ulose + reduced acceptor.. It catalyses the reaction a pyranoside + acceptor = a pyranosid-3,4-diulose + reduced acceptor.. Functionally, catalyzes the single-oxidation or sequential double oxidation reaction of carbohydrates primarily at carbon-2 and/or carbon-3 with the concomitant reduction of the flavin. The enzyme exhibits a broad sugar substrate specificity, oxidizing different aldopyranoses to the corresponding C-1, C-2, C-3 or C-1,2, C-2,3 and C-3,4 (di)dehydro sugars with substrate-specific regioselectivity. Accepts only a narrow range of electron acceptors such as substituted benzoquinones and complexed metal ions and reacts extremely slowly with O(2) as acceptor. May play a role in the natural recycling of plant matter by oxidizing all major monosaccharides in lignocellulose and by reducing quinone compounds or reactive radical species generated during lignin depolymerization. The polypeptide is Pyranose dehydrogenase 3 (Leucoagaricus meleagris (Western flat-topped agaric)).